A 295-amino-acid chain; its full sequence is Probable protein phosphatase 2C 5 (295 aa).

The PPM-type phosphatase domain maps to Q23–F294. Mn(2+) is bound by residues D57 and G58. Residues N151–E170 form a disordered region. Residues D237 and D285 each coordinate Mn(2+).

The protein belongs to the PP2C family. Mg(2+) is required as a cofactor. It depends on Mn(2+) as a cofactor.

It localises to the membrane. The catalysed reaction is O-phospho-L-seryl-[protein] + H2O = L-seryl-[protein] + phosphate. It carries out the reaction O-phospho-L-threonyl-[protein] + H2O = L-threonyl-[protein] + phosphate. Its function is as follows. Enzyme with a broad specificity. The chain is Probable protein phosphatase 2C 5 from Paramecium tetraurelia.